The following is a 213-amino-acid chain: LIM domain-containing protein PLIM2c (213 aa).

LIM zinc-binding domains are found at residues 9–69 (DKCK…LFKE) and 105–165 (DKCA…LFLE). A disordered region spans residues 177-213 (ANHRRSTAEEDKTEPKEDEANPTEEETSDAAAEEHES). A compositionally biased stretch (basic and acidic residues) spans 182–195 (STAEEDKTEPKEDE).

As to quaternary structure, interacts with F-actin. As to expression, exclusively expressed in pollen grains.

The protein resides in the cytoplasm. It is found in the cytoskeleton. Functionally, binds to actin filaments and promotes cross-linking into thick bundles. Has an actin-stabilizing activity. Associates predominantly with long and dynamic actin bundles in the shank of growing pollen tubes. The actin regulatory activities are inhibited by pH &gt; 6.8 and/or high [Ca(2+)]. The protein is LIM domain-containing protein PLIM2c of Arabidopsis thaliana (Mouse-ear cress).